A 255-amino-acid polypeptide reads, in one-letter code: Lactose phosphotransferase system repressor (255 aa).

Positions 3–58 (KKRRLEKILDMLKIDGTITIKEIIDELDISDMTARRDLDALEADGLLTRTHGGAQL) constitute an HTH deoR-type domain. Positions 20–39 (ITIKEIIDELDISDMTARRD) form a DNA-binding region, H-T-H motif.

In terms of biological role, repressor of the lactose catabolism operon. Galactose-6-phosphate is the inducer. The chain is Lactose phosphotransferase system repressor (lacR) from Lactococcus lactis subsp. lactis (Streptococcus lactis).